The chain runs to 213 residues: Orotate phosphoribosyltransferase (213 aa).

K26 serves as a coordination point for 5-phospho-alpha-D-ribose 1-diphosphate. 34-35 (FF) contacts orotate. 5-phospho-alpha-D-ribose 1-diphosphate is bound by residues 72-73 (YK), R99, K100, K103, H105, and 124-132 (DDVITAGTA). Orotate contacts are provided by T128 and R156.

It belongs to the purine/pyrimidine phosphoribosyltransferase family. PyrE subfamily. As to quaternary structure, homodimer. The cofactor is Mg(2+).

It carries out the reaction orotidine 5'-phosphate + diphosphate = orotate + 5-phospho-alpha-D-ribose 1-diphosphate. It functions in the pathway pyrimidine metabolism; UMP biosynthesis via de novo pathway; UMP from orotate: step 1/2. Its function is as follows. Catalyzes the transfer of a ribosyl phosphate group from 5-phosphoribose 1-diphosphate to orotate, leading to the formation of orotidine monophosphate (OMP). The sequence is that of Orotate phosphoribosyltransferase from Thioalkalivibrio sulfidiphilus (strain HL-EbGR7).